A 616-amino-acid polypeptide reads, in one-letter code: Dihydroxy-acid dehydratase (616 aa).

D81 is a binding site for Mg(2+). C122 is a binding site for [2Fe-2S] cluster. Mg(2+) contacts are provided by D123 and K124. K124 is subject to N6-carboxylysine. C195 is a [2Fe-2S] cluster binding site. E491 is a binding site for Mg(2+). Catalysis depends on S517, which acts as the Proton acceptor.

It belongs to the IlvD/Edd family. In terms of assembly, homodimer. [2Fe-2S] cluster serves as cofactor. Requires Mg(2+) as cofactor.

The enzyme catalyses (2R)-2,3-dihydroxy-3-methylbutanoate = 3-methyl-2-oxobutanoate + H2O. It carries out the reaction (2R,3R)-2,3-dihydroxy-3-methylpentanoate = (S)-3-methyl-2-oxopentanoate + H2O. It participates in amino-acid biosynthesis; L-isoleucine biosynthesis; L-isoleucine from 2-oxobutanoate: step 3/4. The protein operates within amino-acid biosynthesis; L-valine biosynthesis; L-valine from pyruvate: step 3/4. Functionally, functions in the biosynthesis of branched-chain amino acids. Catalyzes the dehydration of (2R,3R)-2,3-dihydroxy-3-methylpentanoate (2,3-dihydroxy-3-methylvalerate) into 2-oxo-3-methylpentanoate (2-oxo-3-methylvalerate) and of (2R)-2,3-dihydroxy-3-methylbutanoate (2,3-dihydroxyisovalerate) into 2-oxo-3-methylbutanoate (2-oxoisovalerate), the penultimate precursor to L-isoleucine and L-valine, respectively. The chain is Dihydroxy-acid dehydratase from Edwardsiella ictaluri (strain 93-146).